A 90-amino-acid chain; its full sequence is Sec-independent protein translocase protein TatA (90 aa).

The chain crosses the membrane as a helical span at residues 2 to 22 (GVGGISIWQLLIVLVIILLLF). 2 stretches are compositionally biased toward basic and acidic residues: residues 45–68 (LRDE…HKAE) and 76–90 (ADAD…DEHK). The segment at 45-90 (LRDEERRDAEEAATIEHKQAHKAENPSQRQQADADFKIKSGNDEHK) is disordered.

This sequence belongs to the TatA/E family. In terms of assembly, the Tat system comprises two distinct complexes: a TatABC complex, containing multiple copies of TatA, TatB and TatC subunits, and a separate TatA complex, containing only TatA subunits. Substrates initially bind to the TatABC complex, which probably triggers association of the separate TatA complex to form the active translocon.

It is found in the cell inner membrane. Part of the twin-arginine translocation (Tat) system that transports large folded proteins containing a characteristic twin-arginine motif in their signal peptide across membranes. TatA could form the protein-conducting channel of the Tat system. The polypeptide is Sec-independent protein translocase protein TatA (Nitrosococcus oceani (strain ATCC 19707 / BCRC 17464 / JCM 30415 / NCIMB 11848 / C-107)).